The sequence spans 98 residues: DNA-binding protein HU (98 aa).

The protein belongs to the bacterial histone-like protein family. In terms of assembly, homodimer.

Its function is as follows. Histone-like DNA-binding protein which is capable of wrapping DNA to stabilize it, and thus to prevent its denaturation under extreme environmental conditions. The polypeptide is DNA-binding protein HU (hup) (Campylobacter jejuni subsp. jejuni serotype O:2 (strain ATCC 700819 / NCTC 11168)).